A 210-amino-acid polypeptide reads, in one-letter code: Calcium-activated potassium channel subunit beta-4 (210 aa).

The Cytoplasmic segment spans residues 1 to 19 (MAKLRVAYEYTEAEDKSIR). A helical membrane pass occupies residues 20 to 40 (LGLFLIISGVVSLFIFGFCWL). The Extracellular segment spans residues 41–167 (SPALQDLQAT…DVLLHRTHDE (127 aa)). 2 N-linked (GlcNAc...) asparagine glycosylation sites follow: asparagine 53 and asparagine 90. A helical transmembrane segment spans residues 168-188 (IVLLHCFLWPLVTFVVGVLIV). The Cytoplasmic portion of the chain corresponds to 189–210 (VLTICAKSLAVKAEAMKKRKFS).

It belongs to the KCNMB (TC 8.A.14.1) family. KCNMB4 subfamily. Interacts with KCNMA1 tetramer. There are probably 4 molecules of KCMNB4 per KCNMA1 tetramer. Interacts with FMR1 (via N-terminus). Post-translationally, phosphorylated. Phosphorylation modulates its effect on KCNMA1 activation kinetics. In terms of processing, N-glycosylated. A highly glycosylated form is promoted by KCNMA1. Glycosylation, which is not required for the interaction with KCNMA1 and subcellular location, increases protection against charybdotoxin. In terms of tissue distribution, predominantly expressed in brain. In brain, it is expressed in the cerebellum, cerebral cortex, medulla, spinal cord, occipital pole, frontal lobe, temporal lobe, putamen, amygdala, caudate nucleus, corpus callosum, hippocampus, substantia nigra and thalamus. Weakly or not expressed in other tissues.

Its subcellular location is the membrane. In terms of biological role, regulatory subunit of the calcium activated potassium KCNMA1 (maxiK) channel. Modulates the calcium sensitivity and gating kinetics of KCNMA1, thereby contributing to KCNMA1 channel diversity. Decreases the gating kinetics and calcium sensitivity of the KCNMA1 channel, but with fast deactivation kinetics. May decrease KCNMA1 channel openings at low calcium concentrations but increases channel openings at high calcium concentrations. Makes KCNMA1 channel resistant to 100 nM charybdotoxin (CTX) toxin concentrations. The protein is Calcium-activated potassium channel subunit beta-4 (KCNMB4) of Homo sapiens (Human).